Consider the following 1102-residue polypeptide: Putative helicase/primase complex protein (1102 aa).

2 disordered regions span residues 1031–1057 and 1082–1102; these read TKEEISSTKEETYSTKEETYSTKEETC and EETCSIKEETSSIKEETFTET.

Belongs to the asfivirus F1055L family.

Functionally, may be involved in DNA replication. In African swine fever virus (isolate Tick/Malawi/Lil 20-1/1983) (ASFV), this protein is Putative helicase/primase complex protein.